A 197-amino-acid polypeptide reads, in one-letter code: Small ribosomal subunit protein uS2 (197 aa).

Belongs to the universal ribosomal protein uS2 family.

This chain is Small ribosomal subunit protein uS2 (rps2), found in Archaeoglobus fulgidus (strain ATCC 49558 / DSM 4304 / JCM 9628 / NBRC 100126 / VC-16).